Consider the following 253-residue polypeptide: tRNA1(Val) (adenine(37)-N6)-methyltransferase (253 aa).

It belongs to the methyltransferase superfamily. tRNA (adenine-N(6)-)-methyltransferase family.

It localises to the cytoplasm. It carries out the reaction adenosine(37) in tRNA1(Val) + S-adenosyl-L-methionine = N(6)-methyladenosine(37) in tRNA1(Val) + S-adenosyl-L-homocysteine + H(+). In terms of biological role, specifically methylates the adenine in position 37 of tRNA(1)(Val) (anticodon cmo5UAC). The protein is tRNA1(Val) (adenine(37)-N6)-methyltransferase of Dickeya chrysanthemi (strain Ech1591) (Dickeya zeae (strain Ech1591)).